We begin with the raw amino-acid sequence, 604 residues long: Phenylalanine--tRNA ligase beta subunit (604 aa).

One can recognise a B5 domain in the interval 327 to 402 (YFQEKREVAH…LGRTLDRFSP (76 aa)). Residues aspartate 380, aspartate 386, glutamate 389, and glutamate 390 each coordinate Mg(2+).

Belongs to the phenylalanyl-tRNA synthetase beta subunit family. Type 2 subfamily. Tetramer of two alpha and two beta subunits. It depends on Mg(2+) as a cofactor.

It localises to the cytoplasm. It carries out the reaction tRNA(Phe) + L-phenylalanine + ATP = L-phenylalanyl-tRNA(Phe) + AMP + diphosphate + H(+). This Treponema pallidum subsp. pallidum (strain SS14) protein is Phenylalanine--tRNA ligase beta subunit.